Here is a 238-residue protein sequence, read N- to C-terminus: Ion-translocating oxidoreductase complex subunit E (238 aa).

6 helical membrane passes run 24-44 (ALWQ…TLAV), 52-72 (LGMG…ISSM), 84-104 (VMIG…NAWM), 106-126 (ELYK…AVLG), 141-161 (ILDG…IGGI), and 195-215 (GILL…LLAA).

This sequence belongs to the NqrDE/RnfAE family. As to quaternary structure, the complex is composed of six subunits: RnfA, RnfB, RnfC, RnfD, RnfE and RnfG.

Its subcellular location is the cell inner membrane. In terms of biological role, part of a membrane-bound complex that couples electron transfer with translocation of ions across the membrane. The protein is Ion-translocating oxidoreductase complex subunit E of Azotobacter vinelandii (strain DJ / ATCC BAA-1303).